We begin with the raw amino-acid sequence, 55 residues long: Large ribosomal subunit protein bL32 (55 aa).

Residues 1-19 are compositionally biased toward basic residues; that stretch reads MAVPKRRMSRANTHSRRSQ. Residues 1–20 are disordered; sequence MAVPKRRMSRANTHSRRSQW.

This sequence belongs to the bacterial ribosomal protein bL32 family.

In Corynebacterium jeikeium (strain K411), this protein is Large ribosomal subunit protein bL32.